A 652-amino-acid polypeptide reads, in one-letter code: ATP-dependent zinc metalloprotease FtsH 1 (652 aa).

At 1–9 the chain is on the cytoplasmic side; the sequence is MSDNKWLRN. The chain crosses the membrane as a helical span at residues 10 to 30; it reads GFVWMILIIAAIAVWVTFVQG. The Extracellular portion of the chain corresponds to 31–110; it reads GRGGATITTQ…QTHRASQWGN (80 aa). A helical membrane pass occupies residues 111–131; it reads VLGTLTFLLPTLFLIGVIIFM. The Cytoplasmic segment spans residues 132-652; it reads MRQAQGTNNQ…VPHIKPQPAS (521 aa). 203 to 210 serves as a coordination point for ATP; that stretch reads GPPGTGKT. Residue His425 participates in Zn(2+) binding. Glu426 is an active-site residue. Zn(2+) is bound by residues His429 and Asp501. Residues 623–652 are disordered; the sequence is IATPETARPDSPSEARPAAPVPHIKPQPAS. The segment covering 641-652 has biased composition (pro residues); the sequence is APVPHIKPQPAS.

It in the central section; belongs to the AAA ATPase family. The protein in the C-terminal section; belongs to the peptidase M41 family. In terms of assembly, homohexamer. It depends on Zn(2+) as a cofactor.

It is found in the cell membrane. Its function is as follows. Acts as a processive, ATP-dependent zinc metallopeptidase for both cytoplasmic and membrane proteins. Plays a role in the quality control of integral membrane proteins. This is ATP-dependent zinc metalloprotease FtsH 1 from Thermomicrobium roseum (strain ATCC 27502 / DSM 5159 / P-2).